The chain runs to 110 residues: UPF0102 protein Abu_0255 (110 aa).

This sequence belongs to the UPF0102 family.

The protein is UPF0102 protein Abu_0255 of Aliarcobacter butzleri (strain RM4018) (Arcobacter butzleri).